A 288-amino-acid chain; its full sequence is 4-diphosphocytidyl-2-C-methyl-D-erythritol kinase (288 aa).

Residue K11 is part of the active site. 100 to 110 (PIAAGLGSGSS) contributes to the ATP binding site. D140 is a catalytic residue.

It belongs to the GHMP kinase family. IspE subfamily.

The enzyme catalyses 4-CDP-2-C-methyl-D-erythritol + ATP = 4-CDP-2-C-methyl-D-erythritol 2-phosphate + ADP + H(+). It functions in the pathway isoprenoid biosynthesis; isopentenyl diphosphate biosynthesis via DXP pathway; isopentenyl diphosphate from 1-deoxy-D-xylulose 5-phosphate: step 3/6. Functionally, catalyzes the phosphorylation of the position 2 hydroxy group of 4-diphosphocytidyl-2C-methyl-D-erythritol. This Wolbachia sp. subsp. Drosophila simulans (strain wRi) protein is 4-diphosphocytidyl-2-C-methyl-D-erythritol kinase.